The sequence spans 78 residues: UPF0291 protein Exig_1097 (78 aa).

The segment at glutamate 57–glutamine 78 is disordered. The segment covering threonine 63–glutamine 78 has biased composition (basic and acidic residues).

The protein belongs to the UPF0291 family.

It localises to the cytoplasm. This Exiguobacterium sibiricum (strain DSM 17290 / CCUG 55495 / CIP 109462 / JCM 13490 / 255-15) protein is UPF0291 protein Exig_1097.